The following is a 71-amino-acid chain: MAHLPRVCPFIRRLRVALLCLRPGHRFAHSEPQRQRPASALEMAVGIVVIFSAFLTPSAYVLSNLSQFRRE.

The transit peptide at 1-28 (MAHLPRVCPFIRRLRVALLCLRPGHRFA) directs the protein to the mitochondrion. The Mitochondrial matrix segment spans residues 29 to 39 (HSEPQRQRPAS). Residues 40–63 (ALEMAVGIVVIFSAFLTPSAYVLS) traverse the membrane as a helical segment. Over 64–71 (NLSQFRRE) the chain is Mitochondrial intermembrane.

The protein belongs to the cytochrome c oxidase VIII family. Component of the cytochrome c oxidase (complex IV, CIV), a multisubunit enzyme composed of 14 subunits. The complex is composed of a catalytic core of 3 subunits MT-CO1, MT-CO2 and MT-CO3, encoded in the mitochondrial DNA, and 11 supernumerary subunits COX4I, COX5A, COX5B, COX6A, COX6B, COX6C, COX7A, COX7B, COX7C, COX8 and NDUFA4, which are encoded in the nuclear genome. The complex exists as a monomer or a dimer and forms supercomplexes (SCs) in the inner mitochondrial membrane with NADH-ubiquinone oxidoreductase (complex I, CI) and ubiquinol-cytochrome c oxidoreductase (cytochrome b-c1 complex, complex III, CIII), resulting in different assemblies (supercomplex SCI(1)III(2)IV(1) and megacomplex MCI(2)III(2)IV(2)).

The protein resides in the mitochondrion inner membrane. It functions in the pathway energy metabolism; oxidative phosphorylation. Its function is as follows. Component of the cytochrome c oxidase, the last enzyme in the mitochondrial electron transport chain which drives oxidative phosphorylation. The respiratory chain contains 3 multisubunit complexes succinate dehydrogenase (complex II, CII), ubiquinol-cytochrome c oxidoreductase (cytochrome b-c1 complex, complex III, CIII) and cytochrome c oxidase (complex IV, CIV), that cooperate to transfer electrons derived from NADH and succinate to molecular oxygen, creating an electrochemical gradient over the inner membrane that drives transmembrane transport and the ATP synthase. Cytochrome c oxidase is the component of the respiratory chain that catalyzes the reduction of oxygen to water. Electrons originating from reduced cytochrome c in the intermembrane space (IMS) are transferred via the dinuclear copper A center (CU(A)) of subunit 2 and heme A of subunit 1 to the active site in subunit 1, a binuclear center (BNC) formed by heme A3 and copper B (CU(B)). The BNC reduces molecular oxygen to 2 water molecules using 4 electrons from cytochrome c in the IMS and 4 protons from the mitochondrial matrix. In Eulemur fulvus fulvus (Brown lemur), this protein is Cytochrome c oxidase subunit 8C, mitochondrial (COX8C).